A 1795-amino-acid polypeptide reads, in one-letter code: Protein TIC 214 (1795 aa).

Transmembrane regions (helical) follow at residues 19–39 (IINS…FSIG), 68–88 (FIAG…HLAL), 91–111 (PHTI…WNNH), 133–153 (VFLN…SSML), 176–196 (VGWL…LVWI), and 227–247 (IFSI…PSPI). Positions 1490 to 1517 (EKESTGQVEFESDKEQQRNSESALSNQE) are disordered. Residues 1508–1517 (NSESALSNQE) show a composition bias toward polar residues.

The protein belongs to the TIC214 family. As to quaternary structure, part of the Tic complex.

Its subcellular location is the plastid. The protein localises to the chloroplast inner membrane. Functionally, involved in protein precursor import into chloroplasts. May be part of an intermediate translocation complex acting as a protein-conducting channel at the inner envelope. The polypeptide is Protein TIC 214 (Crucihimalaya wallichii (Rock-cress)).